The following is a 362-amino-acid chain: Phosphoserine aminotransferase (362 aa).

L-glutamate is bound by residues S9 and R42. Residues 76–77 (GR), W102, T153, D174, and Q197 each bind pyridoxal 5'-phosphate. K198 is modified (N6-(pyridoxal phosphate)lysine). Residue 239-240 (NT) participates in pyridoxal 5'-phosphate binding.

Belongs to the class-V pyridoxal-phosphate-dependent aminotransferase family. SerC subfamily. Homodimer. Pyridoxal 5'-phosphate is required as a cofactor.

It localises to the cytoplasm. The enzyme catalyses O-phospho-L-serine + 2-oxoglutarate = 3-phosphooxypyruvate + L-glutamate. The catalysed reaction is 4-(phosphooxy)-L-threonine + 2-oxoglutarate = (R)-3-hydroxy-2-oxo-4-phosphooxybutanoate + L-glutamate. The protein operates within amino-acid biosynthesis; L-serine biosynthesis; L-serine from 3-phospho-D-glycerate: step 2/3. Its pathway is cofactor biosynthesis; pyridoxine 5'-phosphate biosynthesis; pyridoxine 5'-phosphate from D-erythrose 4-phosphate: step 3/5. In terms of biological role, catalyzes the reversible conversion of 3-phosphohydroxypyruvate to phosphoserine and of 3-hydroxy-2-oxo-4-phosphonooxybutanoate to phosphohydroxythreonine. This chain is Phosphoserine aminotransferase, found in Escherichia coli O157:H7.